A 375-amino-acid chain; its full sequence is 23S rRNA (uracil(747)-C(5))-methyltransferase RlmC (375 aa).

Cys-3, Cys-11, Cys-14, and Cys-87 together coordinate [4Fe-4S] cluster. Residues Gln-212, Phe-241, Glu-262, and Asn-307 each contribute to the S-adenosyl-L-methionine site. Cys-334 acts as the Nucleophile in catalysis.

It belongs to the class I-like SAM-binding methyltransferase superfamily. RNA M5U methyltransferase family. RlmC subfamily.

It catalyses the reaction uridine(747) in 23S rRNA + S-adenosyl-L-methionine = 5-methyluridine(747) in 23S rRNA + S-adenosyl-L-homocysteine + H(+). In terms of biological role, catalyzes the formation of 5-methyl-uridine at position 747 (m5U747) in 23S rRNA. The polypeptide is 23S rRNA (uracil(747)-C(5))-methyltransferase RlmC (Escherichia coli O45:K1 (strain S88 / ExPEC)).